Here is a 626-residue protein sequence, read N- to C-terminus: Threonine--tRNA ligase (626 aa).

Residues Met-1–Gly-144 are editing domain. Positions Pro-207 to Pro-506 are catalytic. The Zn(2+) site is built by Cys-299, His-351, and His-475.

Belongs to the class-II aminoacyl-tRNA synthetase family. In terms of assembly, homodimer. The cofactor is Zn(2+).

It localises to the cytoplasm. The enzyme catalyses tRNA(Thr) + L-threonine + ATP = L-threonyl-tRNA(Thr) + AMP + diphosphate + H(+). In terms of biological role, catalyzes the attachment of threonine to tRNA(Thr) in a two-step reaction: L-threonine is first activated by ATP to form Thr-AMP and then transferred to the acceptor end of tRNA(Thr). Also edits incorrectly charged L-seryl-tRNA(Thr). In Thermococcus gammatolerans (strain DSM 15229 / JCM 11827 / EJ3), this protein is Threonine--tRNA ligase.